A 279-amino-acid chain; its full sequence is MSTIGSFDGFQPVSLKQEEEDQPSENDHLSTKEGNSGKDPGSRRISRQQSITKATLYPNPYRQPYVSRKYFVTRPGAIETAVEDLKGHIAQTSGETVQGFWLLTEIDHWNNEKEKILLLTDKTLLICKYDFIMLSCVQVQQVPLNAICCICLGKFVFPGMSLDKRPGDGLRIFWGSTEGWSLLSRWNPWSTEVPYATFTEHPMKQTSEKFLEICKLSEFTSKLVPAIENAHKNSAGSGSGKELVVLTQPILIETYTGLMSFIGNRNKLGYSLARGSIGF.

The disordered stretch occupies residues 1-49 (MSTIGSFDGFQPVSLKQEEEDQPSENDHLSTKEGNSGKDPGSRRISRQQ). The hSac2 domain occupies 72-259 (VTRPGAIETA…ILIETYTGLM (188 aa)).

This sequence belongs to the TPRG1 family. Highly expressed in skin. Also detected at low levels in tongue and esophagus.

It is found in the cytoplasm. This Mus musculus (Mouse) protein is Tumor protein p63-regulated gene 1 protein.